Consider the following 504-residue polypeptide: Cytochrome P450 monooxygenase gsfF (504 aa).

A signal peptide spans 1–16 (MTVLFILSAGLVAVFG). N-linked (GlcNAc...) asparagine glycosylation is found at asparagine 97 and asparagine 150. Cysteine 450 serves as a coordination point for heme.

It belongs to the cytochrome P450 family. The cofactor is heme.

The catalysed reaction is griseophenone B + reduced [NADPH--hemoprotein reductase] + O2 + H(+) = desmethyl-dehydrogriseofulvin + oxidized [NADPH--hemoprotein reductase] + 2 H2O. The protein operates within secondary metabolite biosynthesis; terpenoid biosynthesis. Its function is as follows. Cytochrome P450 monooxygenase; part of the gene cluster that mediates the biosynthesis of griseofulvin, an important antifungal drug that has been in use for a long time for treating dermatophyte infections. The first step of the pathway is the formation of the heptaketide backbone by gsfA which is initiated by priming with acetyl-CoA, followed by sequential condensations of 6 malonyl-CoA units. The resulting benzophenone can undergo a spontaneous dehydration to form norlichexanthone. However, the true precursor for the griseofulvin biosynthesis is not norlichexanthone, but the heptaketide benzophenone that is O-methylated at 3-OH by gsfB to produce griseophenone D which is further methylated at 9-OH by gsfC to yield griseophenone C. Griseophenone C is then substrate of halogenase gsfI which is responsible for the regio-specific chlorination at the C13 position to form griseophenone B. The cytochrome P450 gsfF catalyzes the coupling of orcinol and phloroglucinol rings in griseophenone B to form desmethyl-dehydrogriseofulvin A which is further methylated at 5-OH by gsfD to yield dehydrogriseofulvin. Finally, gsfE performs stereospecific reduction of enone 18 of dehydrogriseofulvin to afford the final product griseofulvin. The chain is Cytochrome P450 monooxygenase gsfF from Penicillium aethiopicum.